A 631-amino-acid polypeptide reads, in one-letter code: Occlusion-derived virus envelope protein E66 (631 aa).

Belongs to the baculoviridae E66 family.

The protein localises to the virion membrane. Component of the polyhedra envelope. The chain is Occlusion-derived virus envelope protein E66 from Leucania separata nucleopolyhedrovirus (LsNPV).